A 74-amino-acid chain; its full sequence is UPF0346 protein RBAM_019500 (74 aa).

This sequence belongs to the UPF0346 family.

This is UPF0346 protein RBAM_019500 from Bacillus velezensis (strain DSM 23117 / BGSC 10A6 / LMG 26770 / FZB42) (Bacillus amyloliquefaciens subsp. plantarum).